We begin with the raw amino-acid sequence, 189 residues long: Protein GrpE (189 aa).

Positions 1 to 37 are disordered; it reads MSDSSKEKKKKFADMVSRQKGDDQQSDNHKQTDDLNE. Basic and acidic residues predominate over residues 17–33; that stretch reads SRQKGDDQQSDNHKQTD.

The protein belongs to the GrpE family. In terms of assembly, homodimer.

The protein localises to the cytoplasm. In terms of biological role, participates actively in the response to hyperosmotic and heat shock by preventing the aggregation of stress-denatured proteins, in association with DnaK and GrpE. It is the nucleotide exchange factor for DnaK and may function as a thermosensor. Unfolded proteins bind initially to DnaJ; upon interaction with the DnaJ-bound protein, DnaK hydrolyzes its bound ATP, resulting in the formation of a stable complex. GrpE releases ADP from DnaK; ATP binding to DnaK triggers the release of the substrate protein, thus completing the reaction cycle. Several rounds of ATP-dependent interactions between DnaJ, DnaK and GrpE are required for fully efficient folding. The chain is Protein GrpE from Wolbachia pipientis wMel.